Reading from the N-terminus, the 197-residue chain is 7-methyl-GTP pyrophosphatase (197 aa).

Asp-69 functions as the Proton acceptor in the catalytic mechanism.

This sequence belongs to the Maf family. YceF subfamily. A divalent metal cation serves as cofactor.

The protein localises to the cytoplasm. It carries out the reaction N(7)-methyl-GTP + H2O = N(7)-methyl-GMP + diphosphate + H(+). Functionally, nucleoside triphosphate pyrophosphatase that hydrolyzes 7-methyl-GTP (m(7)GTP). May have a dual role in cell division arrest and in preventing the incorporation of modified nucleotides into cellular nucleic acids. This is 7-methyl-GTP pyrophosphatase from Syntrophotalea carbinolica (strain DSM 2380 / NBRC 103641 / GraBd1) (Pelobacter carbinolicus).